A 135-amino-acid chain; its full sequence is D-ribose pyranase (135 aa).

H20 acts as the Proton donor in catalysis. Residues D28, H102, and 124–126 contribute to the substrate site; that span reads YAN.

Belongs to the RbsD / FucU family. RbsD subfamily. As to quaternary structure, homodecamer.

It is found in the cytoplasm. It carries out the reaction beta-D-ribopyranose = beta-D-ribofuranose. Its pathway is carbohydrate metabolism; D-ribose degradation; D-ribose 5-phosphate from beta-D-ribopyranose: step 1/2. In terms of biological role, catalyzes the interconversion of beta-pyran and beta-furan forms of D-ribose. This chain is D-ribose pyranase, found in Rhodopirellula baltica (strain DSM 10527 / NCIMB 13988 / SH1).